A 205-amino-acid chain; its full sequence is Helix-loop-helix protein 4 (205 aa).

Residues 3–16 (MVVAKRNARERTRV) form a basic motif region. In terms of domain architecture, bHLH spans 3 to 56 (MVVAKRNARERTRVHTVNQAFLVLKQHLPSLRQFTKRVSKLRILNAAITYIDTL). The segment at 17 to 56 (HTVNQAFLVLKQHLPSLRQFTKRVSKLRILNAAITYIDTL) is helix-loop-helix motif.

Expressed in the ADL sensory neurons.

The protein localises to the nucleus. In terms of biological role, acts as a transcriptional regulator. May mediate transcriptional activation by binding to the E-box motif 5'-CANNTG-3'. Required for the correct morphology, terminal identity and function of the ADL sensory neurons by controlling the expression of the ADL-specific gene repertoire, including chemoreceptor encoding genes, ion channel encoding genes, neuropeptides and the neurotransmitter eat-4. Regulates the expression of the srh-234 chemoreceptor encoding gene in the ADL neurons under feeding conditions. Plays a role in the chemorepulsive response toward ascaroside pheromones mediated by the ADL sensory neurons. The chain is Helix-loop-helix protein 4 (hlh-4) from Caenorhabditis elegans.